The sequence spans 213 residues: MRLRNKPWAADLIAENPDMILVSPENIASNWQSRFAKEQPIYIEVGSGKGQFITQMAQKYPDRNFIAVEIQESAIAVILQKQVELKLPNLQLLLGNGAALTTFFAENEVAGVYLNFSDPWPKTRHEKRRLTYKSFLAEYQQIMQPTGYLRFKTDNQGLFEYSLASLNAYGMVFDDISLDLHNSDLAEDNIQTEYEEKFSKRGQVIYRLEAHYK.

Positions 44, 69, 96, and 118 each coordinate S-adenosyl-L-methionine. Aspartate 118 is an active-site residue. Lysine 122 contributes to the substrate binding site. The interval 124–129 is interaction with RNA; it reads RHEKRR. Residues aspartate 154 and 192 to 195 contribute to the substrate site; that span reads TEYE.

It belongs to the class I-like SAM-binding methyltransferase superfamily. TrmB family.

The enzyme catalyses guanosine(46) in tRNA + S-adenosyl-L-methionine = N(7)-methylguanosine(46) in tRNA + S-adenosyl-L-homocysteine. Its pathway is tRNA modification; N(7)-methylguanine-tRNA biosynthesis. Catalyzes the formation of N(7)-methylguanine at position 46 (m7G46) in tRNA. The sequence is that of tRNA (guanine-N(7)-)-methyltransferase from Latilactobacillus sakei subsp. sakei (strain 23K) (Lactobacillus sakei subsp. sakei).